The chain runs to 607 residues: uncharacterized protein (607 aa).

This is an uncharacterized protein from Ictalurid herpesvirus 1 (strain Auburn) (IcHV-1).